The chain runs to 1042 residues: Sarcoplasmic/endoplasmic reticulum calcium ATPase 2 (1042 aa).

Over 1 to 48 (MENAHTKTVEEVLGHFGVNESTGLSLEQVKKLKERWGSNELPAEEGKT) the chain is Cytoplasmic. A Phosphoserine modification is found at S38. A helical transmembrane segment spans residues 49-69 (LLELVIEQFEDLLVRILLLAA). The Lumenal segment spans residues 70–89 (CISFVLAWFEEGEETITAFV). Residues 90 to 110 (EPFVILLILVANAIVGVWQER) traverse the membrane as a helical segment. The Cytoplasmic segment spans residues 111–253 (NAENAIEALK…QERTPLQQKL (143 aa)). A helical transmembrane segment spans residues 254 to 273 (DEFGEQLSKVISLICIAVWI). At 274-295 (INIGHFNDPVHGGSWIRGAIYY) the chain is on the lumenal side. A 3'-nitrotyrosine mark is found at Y294 and Y295. Residues 296–313 (FKIAVALAVAAIPEGLPA) form a helical membrane-spanning segment. 4 residues coordinate Ca(2+): V304, A305, I307, and E309. Topologically, residues 314 to 756 (VITTCLALGT…EEGRAIYNNM (443 aa)) are cytoplasmic. D351 (4-aspartylphosphate intermediate) is an active-site residue. Positions 351 and 353 each coordinate Mg(2+). T353 contributes to the ATP binding site. Position 441 is a phosphothreonine (T441). ATP contacts are provided by E442, R489, and K514. S531 bears the Phosphoserine mark. R559 contacts ATP. Positions 575–594 (MHLKDSANFIKYETNLTFVG) are interaction with HAX1. The residue at position 580 (S580) is a Phosphoserine. The ATP site is built by T624, G625, and D626. At S663 the chain carries Phosphoserine. R677 and K683 together coordinate ATP. D702 contacts Mg(2+). N705 serves as a coordination point for ATP. A helical membrane pass occupies residues 757 to 776 (KQFIRYLISSNVGEVVCIFL). Residues N767 and E770 each coordinate Ca(2+). Residues 777-786 (TAALGFPEAL) are Lumenal-facing. The helical transmembrane segment at 787–807 (IPVQLLWVNLVTDGLPATALG) threads the bilayer. The segment at 787-807 (IPVQLLWVNLVTDGLPATALG) is interaction with PLN. The interaction with TMEM64 and PDIA3 stretch occupies residues 788–1042 (PVQLLWVNLV…DTNFSDLLWS (255 aa)). Positions 795, 798, and 799 each coordinate Ca(2+). Residues 808–827 (FNPPDLDIMNKPPRNPKEPL) lie on the Cytoplasmic side of the membrane. Residues 828 to 850 (ISGWLFFRYLAIGCYVGAATVGA) traverse the membrane as a helical segment. Over 851–896 (AAWWFIAADGGPRVSFYQLSHFLQCKEDNPDFEGVDCAIFESPYPM) the chain is Lumenal. Residues C875 and C887 are joined by a disulfide bond. The chain crosses the membrane as a helical span at residues 897 to 916 (TMALSVLVTIEMCNALNSLS). E907 is a Ca(2+) binding site. Over 917 to 929 (ENQSLLRMPPWEN) the chain is Cytoplasmic. A helical membrane pass occupies residues 930 to 948 (IWLVGSICLSMSLHFLILY). The segment at 931–942 (WLVGSICLSMSL) is interaction with PLN. At 949-963 (VEPLPLIFQITPLNV) the chain is on the lumenal side. The helical transmembrane segment at 964-984 (TQWLMVLKISLPVILMDETLK) threads the bilayer. Residues 985-1042 (FVARNYLEPGKECVQPAPQSCSLWACTEGVSWPFVLLIVPLVMWVYSTDTNFSDLLWS) lie on the Cytoplasmic side of the membrane.

This sequence belongs to the cation transport ATPase (P-type) (TC 3.A.3) family. Type IIA subfamily. As to quaternary structure, interacts with sarcolipin (SLN); the interaction inhibits ATP2A2 Ca(2+) affinity. Interacts with phospholamban (PLN); the interaction inhibits ATP2A2 Ca(2+) affinity. Interacts with myoregulin (MRLN). Interacts with ARLN and ERLN; the interactions inhibit ATP2A2 Ca(2+) affinity. Interacts with SRTIT1/DWORF; the interaction results in activation of ATP2A2. Interacts with the monomeric forms of SLN, PLN, ARLN, ERLN and STRI1/DWORF. Interacts with HAX1. Interacts with S100A8 and S100A9. Interacts with SLC35G1 and STIM1. Interacts with TMEM203. Interacts with TMEM64 and PDIA3. Interacts with TMX1. Interacts with TMX2. Interacts with VMP1; VMP1 competes with PLN and SLN to prevent them from forming an inhibitory complex with ATP2A2. Interacts with ULK1. Interacts with TUNAR. Interacts with FLVCR2; this interaction occurs in the absence of heme and promotes ATP2A2 proteasomal degradation; this complex is dissociated upon heme binding. Interacts with FNIP1. In terms of assembly, interacts with TRAM2 (via C-terminus). Mg(2+) is required as a cofactor. In terms of processing, nitrated under oxidative stress. Nitration on the two tyrosine residues inhibits catalytic activity. Post-translationally, serotonylated on Gln residues by TGM2 in response to hypoxia, leading to its inactivation. Isoform 2 is highly expressed in heart and slow twitch skeletal muscle. Isoform 1 is widely expressed.

Its subcellular location is the endoplasmic reticulum membrane. It is found in the sarcoplasmic reticulum membrane. It catalyses the reaction Ca(2+)(in) + ATP + H2O = Ca(2+)(out) + ADP + phosphate + H(+). Has different conformational states with differential Ca2+ affinity. The E1 conformational state (active form) shows high Ca(2+) affinity, while the E2 state exhibits low Ca(2+) affinity. Binding of ATP allosterically increases its affinity for subsequent binding of Ca2+. Reversibly inhibited by phospholamban (PLN) at low calcium concentrations. PLN inhibits ATP2A2 Ca(2+) affinity by disrupting its allosteric activation by ATP. Inhibited by sarcolipin (SLN) and myoregulin (MRLN). The inhibition is blocked by VMP1. Enhanced by STRIT1/DWORF; STRIT1 increases activity by displacing sarcolipin (SLN), phospholamban (PLN) and myoregulin (MRLN). Stabilizes SERCA2 in its E2 state. In terms of biological role, this magnesium-dependent enzyme catalyzes the hydrolysis of ATP coupled with the translocation of calcium from the cytosol to the sarcoplasmic reticulum lumen. Involved in autophagy in response to starvation. Upon interaction with VMP1 and activation, controls ER-isolation membrane contacts for autophagosome formation. Also modulates ER contacts with lipid droplets, mitochondria and endosomes. In coordination with FLVCR2 mediates heme-stimulated switching from mitochondrial ATP synthesis to thermogenesis. Its function is as follows. Involved in the regulation of the contraction/relaxation cycle. Acts as a regulator of TNFSF11-mediated Ca(2+) signaling pathways via its interaction with TMEM64 which is critical for the TNFSF11-induced CREB1 activation and mitochondrial ROS generation necessary for proper osteoclast generation. Association between TMEM64 and SERCA2 in the ER leads to cytosolic Ca(2+) spiking for activation of NFATC1 and production of mitochondrial ROS, thereby triggering Ca(2+) signaling cascades that promote osteoclast differentiation and activation. The chain is Sarcoplasmic/endoplasmic reticulum calcium ATPase 2 (ATP2A2) from Oryctolagus cuniculus (Rabbit).